The primary structure comprises 310 residues: tRNA uridine(34) hydroxylase (310 aa).

Residues 124–218 (SDPEVLLIDT…YFEEVPQEES (95 aa)) enclose the Rhodanese domain. The Cysteine persulfide intermediate role is filled by C178.

This sequence belongs to the TrhO family.

It catalyses the reaction uridine(34) in tRNA + AH2 + O2 = 5-hydroxyuridine(34) in tRNA + A + H2O. Functionally, catalyzes oxygen-dependent 5-hydroxyuridine (ho5U) modification at position 34 in tRNAs. In Pseudomonas putida (strain GB-1), this protein is tRNA uridine(34) hydroxylase.